The chain runs to 124 residues: Probable glycine cleavage system H protein (124 aa).

The 82-residue stretch at 23-104 folds into the Lipoyl-binding domain; the sequence is VATVGITDYA…PYKNWLVKIR (82 aa). K64 carries the post-translational modification N6-lipoyllysine.

Belongs to the GcvH family. The glycine cleavage system is composed of four proteins: P, T, L and H. (R)-lipoate serves as cofactor.

Its function is as follows. The glycine cleavage system catalyzes the degradation of glycine. The H protein shuttles the methylamine group of glycine from the P protein to the T protein. This Picrophilus torridus (strain ATCC 700027 / DSM 9790 / JCM 10055 / NBRC 100828 / KAW 2/3) protein is Probable glycine cleavage system H protein.